Here is a 201-residue protein sequence, read N- to C-terminus: tRNA (guanine-N(7)-)-methyltransferase (201 aa).

Glu-34, Glu-59, Asp-86, and Asp-107 together coordinate S-adenosyl-L-methionine. Residue Asp-107 is part of the active site. Residues Lys-111, Asp-143, and 181–184 (TDYE) each bind substrate.

The protein belongs to the class I-like SAM-binding methyltransferase superfamily. TrmB family.

It carries out the reaction guanosine(46) in tRNA + S-adenosyl-L-methionine = N(7)-methylguanosine(46) in tRNA + S-adenosyl-L-homocysteine. The protein operates within tRNA modification; N(7)-methylguanine-tRNA biosynthesis. Its function is as follows. Catalyzes the formation of N(7)-methylguanine at position 46 (m7G46) in tRNA. The sequence is that of tRNA (guanine-N(7)-)-methyltransferase from Mycoplasma mobile (strain ATCC 43663 / 163K / NCTC 11711) (Mesomycoplasma mobile).